The sequence spans 120 residues: NADH-ubiquinone oxidoreductase chain 3 (120 aa).

The next 3 membrane-spanning stretches (helical) occupy residues 6–26 (LLFFVEHVFIFCMIFWLLTWV), 63–83 (IVCVFLILYDVEFIFMYPFFF), and 85–105 (FFLVNAGAFLVFFVFLFFVFY).

It belongs to the complex I subunit 3 family.

It localises to the mitochondrion membrane. It catalyses the reaction a ubiquinone + NADH + 5 H(+)(in) = a ubiquinol + NAD(+) + 4 H(+)(out). Functionally, core subunit of the mitochondrial membrane respiratory chain NADH dehydrogenase (Complex I) that is believed to belong to the minimal assembly required for catalysis. Complex I functions in the transfer of electrons from NADH to the respiratory chain. The immediate electron acceptor for the enzyme is believed to be ubiquinone. This is NADH-ubiquinone oxidoreductase chain 3 (ND3) from Paramecium tetraurelia.